Here is a 58-residue protein sequence, read N- to C-terminus: Small ribosomal subunit protein bS21A (58 aa).

The interval 38–58 is disordered; the sequence is YEKPSLRRKRKAEAARKGGRN. Residues 49–58 show a composition bias toward basic and acidic residues; sequence AEAARKGGRN.

This sequence belongs to the bacterial ribosomal protein bS21 family.

In Trichormus variabilis (strain ATCC 29413 / PCC 7937) (Anabaena variabilis), this protein is Small ribosomal subunit protein bS21A.